The chain runs to 457 residues: Argininosuccinate lyase (457 aa).

This sequence belongs to the lyase 1 family. Argininosuccinate lyase subfamily.

Its subcellular location is the cytoplasm. The enzyme catalyses 2-(N(omega)-L-arginino)succinate = fumarate + L-arginine. Its pathway is amino-acid biosynthesis; L-arginine biosynthesis; L-arginine from L-ornithine and carbamoyl phosphate: step 3/3. The protein is Argininosuccinate lyase of Erwinia tasmaniensis (strain DSM 17950 / CFBP 7177 / CIP 109463 / NCPPB 4357 / Et1/99).